The following is a 1026-amino-acid chain: MDAQFEKAIEIAFDPRSSHALKSQALEFLNQVRTDVQAWRICAALFTRSPRASDIVRHVSLEMVNNAVHSQGLDAPDLAFVKNSLLDYITRTYGPNAQDQADPANVQNKLTQTLTYLFVALYGEGWETFFDDFLALTSSQNGASRDNLSGVMLYLRILSSVHDEIADLMISRQGNESKRNNDLKDLIRERHMQKIAMSWQDILAQWTNKHDGVVELTLKVIGKWVSWIDISLVVSQDMQNLILPLVGRVNNTSNNIDTVRDTAIDTLTEIVAKKMGPSHKMELISFLNLGGIITELLASQGLHEFKGTSRYDNDLAEVVAKLLNTIMTDVVRVLEDNKVDAETRAKAERHLQDFLPALLRLFSDEFDEVCSTVIPSLTDLLTFLRRVGTLPDSYSQMLRPILSAIVAKMRYDETSSWGTEDGESDEAEFQELRKRLQILQKSVAAVDQTLYIEFLSNLVGNMFATLEQQGPQMDWRDLDLALHEIYLFGELALPNAGLAHKSEPNVVATERLAVMMSKMVESGIANFPHPAILLQYMEICVRYHAFFESHHQYIAPVLENFVHLIHHEHPRVRTRSWYLFLRFVKQLRAQVGNVAKTVIQSISDLLPIKAEVPSTEAEDDMSSDESDHSADAIFNGQLYLFEAIGCISSTSTTPETDQALYARSVMEPLFSDMSVHLPRAKSGDAQAILQIHHIIMALGTLANGFADPNQSQNPNNQRTPPQAVSAEFSRASEAILVALNELNTNGEIRAACRSAFSRLLGVLGATILPQLPQWIEGLLSQSSSKDEMAFFLRLLEQIVYNFKGEIYNILDLLLTPLLQRVFAGLSEPINGTDDEIQLQELRREYVSFVQVILINELGGVLVSTSNQGVFESLVNSIMTIAKTIVHGNIVASRISFNVLARMAQQWGGPDVATIGENPTANGVPAPAFPGFDQFMLTQFHAACWEVMQDINFRPYADAQTRQILNEITGLEQIIYLKTGEKFISHCQTVTFPAVGMGAEDFLRALTSSTDRKAVMAYLQQLLKSRR.

Belongs to the exportin family.

The protein localises to the nucleus. It is found in the cytoplasm. Its function is as follows. tRNA nucleus export receptor which facilitates tRNA translocation across the nuclear pore complex. Involved in pre-tRNA splicing, probably by affecting the interaction of pre-tRNA with splicing endonuclease. The chain is Exportin-T (los1) from Neurospora crassa (strain ATCC 24698 / 74-OR23-1A / CBS 708.71 / DSM 1257 / FGSC 987).